The sequence spans 1487 residues: Chromosome partition protein MukB (1487 aa).

34 to 41 (GGNGAGKS) contacts ATP. Coiled-coil stretches lie at residues 297-458 (GSRE…TNAL), 506-601 (RESQ…LEAI), 637-666 (LEQE…RLAS), 781-806 (RAAR…AKAA), 836-1109 (EQAL…ELRT), and 1210-1266 (VEAI…LSNI). The tract at residues 667 to 784 (PGGSNDPRLK…EIPLFGRAAR (118 aa)) is flexible hinge.

Belongs to the SMC family. MukB subfamily. As to quaternary structure, homodimerization via its hinge domain. Binds to DNA via its C-terminal region. Interacts, and probably forms a ternary complex, with MukE and MukF via its C-terminal region. The complex formation is stimulated by calcium or magnesium. Interacts with tubulin-related protein FtsZ.

It localises to the cytoplasm. Its subcellular location is the nucleoid. Plays a central role in chromosome condensation, segregation and cell cycle progression. Functions as a homodimer, which is essential for chromosome partition. Involved in negative DNA supercoiling in vivo, and by this means organize and compact chromosomes. May achieve or facilitate chromosome segregation by condensation DNA from both sides of a centrally located replisome during cell division. In Vibrio parahaemolyticus serotype O3:K6 (strain RIMD 2210633), this protein is Chromosome partition protein MukB.